A 391-amino-acid polypeptide reads, in one-letter code: Anhydro-N-acetylmuramic acid kinase (391 aa).

9–16 serves as a coordination point for ATP; that stretch reads GTSYDAVE.

It belongs to the anhydro-N-acetylmuramic acid kinase family.

It carries out the reaction 1,6-anhydro-N-acetyl-beta-muramate + ATP + H2O = N-acetyl-D-muramate 6-phosphate + ADP + H(+). The protein operates within amino-sugar metabolism; 1,6-anhydro-N-acetylmuramate degradation. It functions in the pathway cell wall biogenesis; peptidoglycan recycling. Functionally, catalyzes the specific phosphorylation of 1,6-anhydro-N-acetylmuramic acid (anhMurNAc) with the simultaneous cleavage of the 1,6-anhydro ring, generating MurNAc-6-P. Is required for the utilization of anhMurNAc either imported from the medium or derived from its own cell wall murein, and thus plays a role in cell wall recycling. This chain is Anhydro-N-acetylmuramic acid kinase, found in Streptomyces coelicolor (strain ATCC BAA-471 / A3(2) / M145).